We begin with the raw amino-acid sequence, 273 residues long: Putative pyruvate, phosphate dikinase regulatory protein (273 aa).

ADP is bound at residue 153-160 (GVSRTSKS).

The protein belongs to the pyruvate, phosphate/water dikinase regulatory protein family. PDRP subfamily.

The catalysed reaction is N(tele)-phospho-L-histidyl/L-threonyl-[pyruvate, phosphate dikinase] + ADP = N(tele)-phospho-L-histidyl/O-phospho-L-threonyl-[pyruvate, phosphate dikinase] + AMP + H(+). It catalyses the reaction N(tele)-phospho-L-histidyl/O-phospho-L-threonyl-[pyruvate, phosphate dikinase] + phosphate + H(+) = N(tele)-phospho-L-histidyl/L-threonyl-[pyruvate, phosphate dikinase] + diphosphate. Functionally, bifunctional serine/threonine kinase and phosphorylase involved in the regulation of the pyruvate, phosphate dikinase (PPDK) by catalyzing its phosphorylation/dephosphorylation. This chain is Putative pyruvate, phosphate dikinase regulatory protein, found in Ehrlichia ruminantium (strain Gardel).